Consider the following 322-residue polypeptide: Crystallin J1A (322 aa).

The protein belongs to the ADP-ribosylglycohydrolase family. J1 crystallin subfamily. Expressed in the rhopalia. Present in both the large and small eyes.

The sequence is that of Crystallin J1A from Tripedalia cystophora (Jellyfish).